A 335-amino-acid polypeptide reads, in one-letter code: MAGSPTCLTLIYILWQLTGSAASGPVKELVGSVGGAVTFPLKSKVKQVDSIVWTFNTTPLVTIQPEGGTIIVTQNRNRERVDFPDGGYSLKLSKLKKNDSGIYYVGIYSSSLQQPSTQEYVLHVYEHLSKPKVTMGLQSNKNGTCVTNLTCCMEHGEEDVIYTWKALGQAANESHNGSILPISWRWGESDMTFICVARNPVSRNFSSPILARKLCEGAADDPDSSMVLLCLLLVPLLLSLFVLGLFLWFLKRERQEEYIEEKKRVDICRETPNICPHSGENTEYDTIPHTNRTILKEDPANTVYSTVEIPKKMENPHSLLTMPDTPRLFAYENVI.

The signal sequence occupies residues M1–A22. The Ig-like V-type domain occupies S23–V124. The Extracellular portion of the chain corresponds to S23–M226. N-linked (GlcNAc...) asparagine glycans are attached at residues N98, N142, N148, N172, N176, and N204. One can recognise an Ig-like C2-type domain in the interval P131–S206. 2 disulfide bridges follow: C145/C215 and C151/C195. The helical transmembrane segment at V227–L247 threads the bilayer. Over W248–I335 the chain is Cytoplasmic. The interaction with FYN when phosphorylated at Tyr-284 stretch occupies residues S278–K296. Residues T302–V307 carry the ITSM motif.

As to quaternary structure, isoform 1 binds to SH2D1A when its cytoplasmic tail is phosphorylated in the presence of FYN (in vitro); low affinity binding, the physiological relevance of the interaction is questioned. Interacts with SH2D1B; in NK cells. Interacts (via ITSM phosphorylated on Tyr-302) with SH2D1B, PTPN6/SHP-1, PTPN11/SHP-2, INPP5D/SHIP1, CSK and FYN. Expressed in spleen, lymph node, peripheral blood leukocytes, bone marrow, small intestine, stomach, appendix, lung and trachea. Expression was detected in NK cells, activated B-cells, NK-cell line but not in promyelocytic, B-, or T-cell lines. Expressed in monocytes. Isoform 3 is expressed at much lower level than isoform 1.

The protein resides in the membrane. In terms of biological role, self-ligand receptor of the signaling lymphocytic activation molecule (SLAM) family. SLAM receptors triggered by homo- or heterotypic cell-cell interactions are modulating the activation and differentiation of a wide variety of immune cells and thus are involved in the regulation and interconnection of both innate and adaptive immune response. Activities are controlled by presence or absence of small cytoplasmic adapter proteins, SH2D1A/SAP and/or SH2D1B/EAT-2. Isoform 1 mediates NK cell activation through a SH2D1A-independent extracellular signal-regulated ERK-mediated pathway. Positively regulates NK cell functions by a mechanism dependent on phosphorylated SH2D1B. Downstream signaling implicates PLCG1, PLCG2 and PI3K. In addition to heterotypic NK cells-target cells interactions also homotypic interactions between NK cells may contribute to activation. However, in the absence of SH2D1B, inhibits NK cell function. Also acts inhibitory in T-cells. May play a role in lymphocyte adhesion. In LPS-activated monocytes negatively regulates production of pro-inflammatory cytokines. Its function is as follows. Isoform 3 does not mediate any NK cell activation. This Homo sapiens (Human) protein is SLAM family member 7 (SLAMF7).